Reading from the N-terminus, the 392-residue chain is Small ribosomal subunit protein bS1 (392 aa).

S1 motif domains lie at 16–90 (GDKV…LSKR), 108–173 (DEVI…LSRK), 194–262 (GDVI…LSIK), and 279–348 (DDVI…LSIK). The segment at 361–380 (ASTTQSYLEDDNDEDKPTLG) is disordered.

Belongs to the bacterial ribosomal protein bS1 family.

Its function is as follows. Binds mRNA; thus facilitating recognition of the initiation point. It is needed to translate mRNA with a short Shine-Dalgarno (SD) purine-rich sequence. This chain is Small ribosomal subunit protein bS1 (rpsA), found in Staphylococcus epidermidis (strain ATCC 35984 / DSM 28319 / BCRC 17069 / CCUG 31568 / BM 3577 / RP62A).